Reading from the N-terminus, the 214-residue chain is Large ribosomal subunit protein uL2my, C-terminal part (214 aa).

The N-terminal 30 residues, 1–30 (MSGLVALCRARASASSSLFNSVIRPAFRNF), are a transit peptide targeting the mitochondrion. The interval 157 to 214 (VAMNPCDHPHGGGEGKSKSSGSRGRTSVSPWGKPCKGGYKSASVKKKKKRLAEAAAKM) is disordered. Residues 163 to 173 (DHPHGGGEGKS) are compositionally biased toward basic and acidic residues. Low complexity predominate over residues 174 to 185 (KSSGSRGRTSVS).

Belongs to the universal ribosomal protein uL2 family. As to quaternary structure, component of the mitochondrial ribosome large subunit.

It is found in the mitochondrion. The sequence is that of Large ribosomal subunit protein uL2my, C-terminal part from Arabidopsis thaliana (Mouse-ear cress).